Consider the following 879-residue polypeptide: Interference hedgehog (879 aa).

A signal peptide spans 1-20 (MTLLTSSLLLFSLLTSRLEA). Residues 21-703 (IPVLEKSPAH…ETFNMSPMLT (683 aa)) lie on the Extracellular side of the membrane. 4 Ig-like C2-type domains span residues 45–142 (PGVR…IARL), 132–232 (PLVV…ERIQ), 252–340 (PHLL…YIKV), and 346–432 (PQIV…LQVN). Intrachain disulfides connect Cys-68-Cys-126, Cys-173-Cys-220, Cys-276-Cys-324, and Cys-367-Cys-414. N-linked (GlcNAc...) asparagine glycans are attached at residues Asn-102 and Asn-209. The tract at residues 426 to 467 (GTLLQVNPKQIQEPRESGGTHRPKPNQGSKQKQMYPPSPPNV) is disordered. 2 Fibronectin type-III domains span residues 461–567 (PPSP…LQPG) and 575–670 (VPEL…TQRP). Asn-466 carries an N-linked (GlcNAc...) asparagine glycan. The heparin site is built by Arg-497, Lys-501, Lys-503, and Arg-541. Asn-557 is a glycosylation site (N-linked (GlcNAc...) asparagine). The disordered stretch occupies residues 662-698 (LKQGRTQRPKTSTTEEPTLQMGDRDTTTPSHNETFNM). Composition is skewed to polar residues over residues 665–678 (GRTQRPKTSTTEEP) and 688–698 (TTPSHNETFNM). Asn-693 carries N-linked (GlcNAc...) asparagine glycosylation. A helical membrane pass occupies residues 704 to 724 (GTLGGGAVLTLLLISICLCVC). Over 725–879 (RRRSSRSRGN…SSGSLNSVGV (155 aa)) the chain is Cytoplasmic. The disordered stretch occupies residues 728 to 879 (SSRSRGNNPN…SSGSLNSVGV (152 aa)). 2 stretches are compositionally biased toward low complexity: residues 822–836 (RAGGSNGSNNGNNNN) and 863–879 (SSRSENLSSGSLNSVGV).

This sequence belongs to the immunoglobulin superfamily. IHOG family. Homodimer. Heterotetramer; 2 iHog chains bind 2 hh chains when facilitated by heparin, heparin is required to promote high-affinity interactions between hh and iHog.

It localises to the membrane. Functionally, mediates response to the active Hedgehog (Hh) protein signal in embryos, functioning upstream or at the level of patched (ptc). The chain is Interference hedgehog from Drosophila erecta (Fruit fly).